Reading from the N-terminus, the 270-residue chain is uncharacterized protein (270 aa).

Residues 1-10 (MFGLKVKDAT) show a composition bias toward basic and acidic residues. 2 disordered regions span residues 1-115 (MFGL…PTPW) and 215-236 (QTGFDTDDTDNKKQGFRKQGEQ). 2 stretches are compositionally biased toward low complexity: residues 26-41 (SSSSSTTSSTSTTQRG) and 98-113 (GTSPSSSESGQSGTPT).

The protein belongs to the adhesin P1 family.

This is an uncharacterized protein from Mycoplasma pneumoniae (strain ATCC 29342 / M129 / Subtype 1) (Mycoplasmoides pneumoniae).